The following is a 116-amino-acid chain: CDKN2AIP N-terminal-like protein (116 aa).

M1 is subject to N-acetylmethionine. The region spanning 24–116 (AEQFRSYSES…RSELMKKHQS (93 aa)) is the XRN2-binding (XTBD) domain.

The protein belongs to the CARF family. Interacts with XRN2; the interaction is direct.

The polypeptide is CDKN2AIP N-terminal-like protein (Cdkn2aipnl) (Rattus norvegicus (Rat)).